Consider the following 1080-residue polypeptide: MREFLKDDYDVIVCGGGPVGLATAYRCAKAGKKVLCLEKSVFFNGGGSSGDVVRMLRTMYTEDYMADLAHETLGLWKELGDDAGEGDLVWMTGLLNFGDPNYGAGGPEGTLLGPIPNLERLGMQYKVLTAQEIMEEYPFRNIPSNHQGVFAPDNGVINLPLVLRSLYKLCLQYGCKMVSHAEVKLIKNLSTTMVEIEVEHTDVDQKNKQSFKVKSKKAAITSNSFCNHIIKPSFGWELDMTIWEMTSSYFVAKPGPNATVFKSMWFNFQNDTDNDPTKSNLYYGFPAVPWMTDNHCRIALDAALRQIKDPNDRHDGVETHDVNRTRDWVREHIPGVDDTPLFNVSALMANVYDNMFVLDFIPETNNNVVMFACGWAMKFIPLLGKILSQLLDEGKTQYPIDHFALNRGNGALIIKEGQTPKSVNSQVRAPRYTSMHCKPLTIAKSTVPTNQSSNPDGASSTAPTQSLRSLFASRLLQRSVGMEAKFHSIIAKNRSKRSTKASQKDLTVGIIGAGMAGLYAAMILQDLGLQYNILEANKERVGGRIYTYRFPQNQDKYQTVELGAMRFPKIEIMDRLLNLDKPWSLFSKLEKAGHKIPTIPYHLTVDNNLVYYNGKRIFANTLLNDDPLYFSDTHNGGPGTAVPDKYTYQPYGDLLDAVYKKFSDDLENDFESGFETLLKSDNYSTRAYLFEKGPYPQSVVNYLETMDTGTGLYDMAFSETIMDYFDFSAGDEWLCIDGGTDIIVNSMVKTLRPGCIEQGKVVTKVSRVVGKSGDVSNLKVDFLDGTEGRLFKHVISTGTLASLRRVDLSDLKLSHNKRTAIRSLHYDHSVKIALSFKSRWWEDSKFMNGKPMLGGKSSTDLPVRTIVYPSYGIGQPGVSGVLIVSYTWSLDASRIGSLVGDRPSEEVLIKLCMANLAEVHNVPVATLQQLFVDYKCWDWYNDDYSSGAFALYSPSQFSQLFPSLTKPSPDGRFHLAGEATSVHHGWVIGSLNSAYRSVDHILQVEGLDELRAKLRLNWGFIDEVEDPQDDQQYVDPHHNLSGPNAKKFRSNVSQVAIQPRFKAPRNFKPRNTAASIGGLK.

The interval 1-450 (MREFLKDDYD…TIAKSTVPTN (450 aa)) is putative sarcosine oxidase. 10 to 40 (DVIVCGGGPVGLATAYRCAKAGKKVLCLEKS) lines the FAD pocket. Residues 445-464 (STVPTNQSSNPDGASSTAPT) are disordered. The tract at residues 450–1080 (NQSSNPDGAS…NTAASIGGLK (631 aa)) is putative L-amino-acid oxidase. A helical membrane pass occupies residues 508–528 (VGIIGAGMAGLYAAMILQDLG). FAD-binding positions include Glu-535, Arg-544, and 563-564 (GA). Residue Tyr-886 coordinates substrate. FAD is bound by residues Glu-978 and 987–990 (VIGS).

In the N-terminal section; belongs to the MSOX/MTOX family. The protein in the C-terminal section; belongs to the flavin monoamine oxidase family. It depends on FAD as a cofactor.

It localises to the membrane. The catalysed reaction is sarcosine + O2 + H2O = formaldehyde + glycine + H2O2. It carries out the reaction L-pipecolate + O2 = L-1-piperideine-6-carboxylate + H2O2 + H(+). The enzyme catalyses an L-alpha-amino acid + O2 + H2O = a 2-oxocarboxylate + H2O2 + NH4(+). Functionally, catalyzes an oxidative deamination of predominantly hydrophobic and aromatic L-amino acids. Metabolizes sarcosine, L-pipecolic acid and L-proline. This Dictyostelium discoideum (Social amoeba) protein is Putative bifunctional amine oxidase DDB_G0291301.